The chain runs to 500 residues: NAD(P)H-quinone oxidoreductase chain 4, chloroplastic (500 aa).

15 helical membrane passes run 4-24 (FPWL…IFFL), 35-55 (YTIF…CYHF), 87-107 (IGPI…AWPV), 113-130 (LFNF…GLFS), 134-154 (LLLF…LLSM), 167-187 (FILY…GIGL), 211-231 (IIFY…IPLH), 242-262 (HYST…YGLV), 272-292 (AHSI…IYAA), 305-325 (IAYS…SITD), 330-350 (GALL…FLAG), 364-384 (MGGI…FSMA), 386-406 (LALP…GIIT), 416-436 (ILIT…SLSM), and 463-483 (FLSI…DFIF).

This sequence belongs to the complex I subunit 4 family.

It is found in the plastid. Its subcellular location is the chloroplast thylakoid membrane. The enzyme catalyses a plastoquinone + NADH + (n+1) H(+)(in) = a plastoquinol + NAD(+) + n H(+)(out). It carries out the reaction a plastoquinone + NADPH + (n+1) H(+)(in) = a plastoquinol + NADP(+) + n H(+)(out). In Coffea arabica (Arabian coffee), this protein is NAD(P)H-quinone oxidoreductase chain 4, chloroplastic.